A 310-amino-acid polypeptide reads, in one-letter code: Malate dehydrogenase (310 aa).

NAD(+)-binding positions include 7–12 (GAGNVG) and Asp32. Positions 81 and 87 each coordinate substrate. NAD(+)-binding positions include Asn94 and 117 to 119 (VSN). Substrate is bound by residues Asn119 and Arg150. His174 functions as the Proton acceptor in the catalytic mechanism.

Belongs to the LDH/MDH superfamily. MDH type 3 family. Homotetramer; arranged as a dimer of dimers.

It catalyses the reaction (S)-malate + NAD(+) = oxaloacetate + NADH + H(+). Catalyzes the reversible oxidation of malate to oxaloacetate. This Chlorobaculum parvum (strain DSM 263 / NCIMB 8327) (Chlorobium vibrioforme subsp. thiosulfatophilum) protein is Malate dehydrogenase.